Consider the following 174-residue polypeptide: MLNFLNICSKTRKSWVLLIFTVVILELIALYLQHIVLIKPCVLCVYQRCALCGIGIAGLIGTIAPFTPLRFFSIPIWIYSAWKGLLLAKEYTDIQLHPSPFFMCDLFVQFPHWLPLNKWWPSMFDADGDCAEYKWYFLSLEISQWMLIIFANYLIIAILVSLSQIIDLKKWNNK.

Residues 1–14 are Cytoplasmic-facing; sequence MLNFLNICSKTRKS. A helical transmembrane segment spans residues 15–31; that stretch reads WVLLIFTVVILELIALY. At 32–49 the chain is on the periplasmic side; that stretch reads LQHIVLIKPCVLCVYQRC. Cys41 and Cys44 are joined by a disulfide. A helical transmembrane segment spans residues 50 to 65; it reads ALCGIGIAGLIGTIAP. The Cytoplasmic portion of the chain corresponds to 66–71; the sequence is FTPLRF. The helical transmembrane segment at 72–89 threads the bilayer; the sequence is FSIPIWIYSAWKGLLLAK. Topologically, residues 90–144 are periplasmic; it reads EYTDIQLHPSPFFMCDLFVQFPHWLPLNKWWPSMFDADGDCAEYKWYFLSLEISQ. A disulfide bond links Cys104 and Cys130. Residues 145–163 traverse the membrane as a helical segment; it reads WMLIIFANYLIIAILVSLS. The Cytoplasmic portion of the chain corresponds to 164-174; that stretch reads QIIDLKKWNNK.

It belongs to the DsbB family.

The protein localises to the cell inner membrane. Its function is as follows. Required for disulfide bond formation in some periplasmic proteins. Acts by oxidizing the DsbA protein. In Blochmanniella pennsylvanica (strain BPEN), this protein is Disulfide bond formation protein B.